The sequence spans 193 residues: dCTP deaminase (193 aa).

DCTP-binding positions include 110 to 115 (RSSLAR), D128, 136 to 138 (VLE), Y171, K178, and Q182. Residue E138 is the Proton donor/acceptor of the active site. The interval 169–193 (RPYNSRQDAKYKGQQGAVASRIDKD) is disordered.

Belongs to the dCTP deaminase family. Homotrimer.

It carries out the reaction dCTP + H2O + H(+) = dUTP + NH4(+). The protein operates within pyrimidine metabolism; dUMP biosynthesis; dUMP from dCTP (dUTP route): step 1/2. Functionally, catalyzes the deamination of dCTP to dUTP. The polypeptide is dCTP deaminase (Erwinia tasmaniensis (strain DSM 17950 / CFBP 7177 / CIP 109463 / NCPPB 4357 / Et1/99)).